The primary structure comprises 162 residues: Corticoliberin-2 (162 aa).

The N-terminal stretch at 1–24 (MRLNFLVTTMALLVAFPPPYECRA) is a signal peptide. Residues 25–119 (IDSSSNQPVT…ALDSEERERR (95 aa)) constitute a propeptide that is removed on maturation. The tract at residues 57 to 79 (LGNRNKNSPRSPPDTYPEASQYS) is disordered. Phe160 bears the Phenylalanine amide mark.

Belongs to the sauvagine/corticotropin-releasing factor/urotensin I family.

The protein resides in the secreted. Its function is as follows. This hormone from hypothalamus regulates the release of corticotropin from pituitary gland. In Catostomus commersonii (White sucker), this protein is Corticoliberin-2 (crf2).